Consider the following 322-residue polypeptide: Ribosomal RNA small subunit methyltransferase H (322 aa).

S-adenosyl-L-methionine-binding positions include 47–49 (GGH), Asp67, Phe93, Asp112, and Gln119.

This sequence belongs to the methyltransferase superfamily. RsmH family.

The protein resides in the cytoplasm. The enzyme catalyses cytidine(1402) in 16S rRNA + S-adenosyl-L-methionine = N(4)-methylcytidine(1402) in 16S rRNA + S-adenosyl-L-homocysteine + H(+). Its function is as follows. Specifically methylates the N4 position of cytidine in position 1402 (C1402) of 16S rRNA. This Stenotrophomonas maltophilia (strain K279a) protein is Ribosomal RNA small subunit methyltransferase H.